Reading from the N-terminus, the 216-residue chain is Redox-sensing transcriptional repressor Rex (216 aa).

The H-T-H motif DNA-binding region spans 16 to 55 (VYYRYLNVLLNANKHRVSSTELSEAVQVDSATIRRDFSYF). 90-95 (GVGSLG) contributes to the NAD(+) binding site.

Belongs to the transcriptional regulatory Rex family. Homodimer.

The protein resides in the cytoplasm. In terms of biological role, modulates transcription in response to changes in cellular NADH/NAD(+) redox state. In Limosilactobacillus fermentum (strain NBRC 3956 / LMG 18251) (Lactobacillus fermentum), this protein is Redox-sensing transcriptional repressor Rex.